A 75-amino-acid chain; its full sequence is uncharacterized protein (75 aa).

Residues 19–38 show a composition bias toward polar residues; sequence FHNTAPSKTNVNVPRANKSQ. The tract at residues 19–42 is disordered; it reads FHNTAPSKTNVNVPRANKSQSKGK. A helical transmembrane segment spans residues 47 to 66; it reads LLVLVGTLALVTSVISVNYQ.

It localises to the membrane. This is an uncharacterized protein from Saccharomyces cerevisiae (strain ATCC 204508 / S288c) (Baker's yeast).